The following is a 256-amino-acid chain: Thiazole synthase (256 aa).

The Schiff-base intermediate with DXP role is filled by Lys-96. 1-deoxy-D-xylulose 5-phosphate is bound by residues Gly-157, 183 to 184, and 205 to 206; these read AG and NT.

This sequence belongs to the ThiG family. As to quaternary structure, homotetramer. Forms heterodimers with either ThiH or ThiS.

Its subcellular location is the cytoplasm. The enzyme catalyses [ThiS sulfur-carrier protein]-C-terminal-Gly-aminoethanethioate + 2-iminoacetate + 1-deoxy-D-xylulose 5-phosphate = [ThiS sulfur-carrier protein]-C-terminal Gly-Gly + 2-[(2R,5Z)-2-carboxy-4-methylthiazol-5(2H)-ylidene]ethyl phosphate + 2 H2O + H(+). It participates in cofactor biosynthesis; thiamine diphosphate biosynthesis. Its function is as follows. Catalyzes the rearrangement of 1-deoxy-D-xylulose 5-phosphate (DXP) to produce the thiazole phosphate moiety of thiamine. Sulfur is provided by the thiocarboxylate moiety of the carrier protein ThiS. In vitro, sulfur can be provided by H(2)S. This Clostridium beijerinckii (strain ATCC 51743 / NCIMB 8052) (Clostridium acetobutylicum) protein is Thiazole synthase.